The primary structure comprises 612 residues: ETS-related transcription factor Elf-1 (612 aa).

Residues S110, S163, S167, and S168 each carry the phosphoserine modification. Residues V156–P169 are compositionally biased toward polar residues. The segment at V156–K199 is disordered. A compositionally biased stretch (basic residues) spans R172–P182. A Phosphoserine modification is found at S187. Phosphothreonine is present on T190. Positions I208–K290 form a DNA-binding region, ETS. The segment at D300 to V361 is disordered. A compositionally biased stretch (low complexity) spans S305–S322. Positions R323 to P335 are enriched in polar residues. Residue S431 is modified to Phosphoserine. Residues E562–K577 show a composition bias toward basic and acidic residues. The interval E562–V586 is disordered.

This sequence belongs to the ETS family. As to quaternary structure, binds to the underphosphorylated form of RB. May interact with other transcription factors in order to regulate specific genes. Interacts with RUNX1. Interacts with SP1; the interaction is inhibited by glycosylation of SP1. In terms of tissue distribution, predominantly found in hematopoietic cells. Detected in other cell types such as fibroblasts.

The protein resides in the nucleus. Functionally, transcription factor that activates the LYN and BLK promoters. In Mus musculus (Mouse), this protein is ETS-related transcription factor Elf-1 (Elf1).